A 342-amino-acid polypeptide reads, in one-letter code: Holliday junction branch migration complex subunit RuvB (342 aa).

The large ATPase domain (RuvB-L) stretch occupies residues 1-179; sequence MTNILSPEKS…FGIPMRLNFY (179 aa). Residues I18, R19, G60, K63, T64, T65, 126-128, R169, Y179, and R216 contribute to the ATP site; that span reads EDF. Position 64 (T64) interacts with Mg(2+). The segment at 180 to 250 is small ATPAse domain (RuvB-S); the sequence is NTEELKKVLN…ISDFGLNRLE (71 aa). The interval 253 to 342 is head domain (RuvB-H); it reads CIGLDSNDYR…HQFNIFNENE (90 aa). Positions 289, 308, and 313 each coordinate DNA.

The protein belongs to the RuvB family. In terms of assembly, homohexamer. Forms an RuvA(8)-RuvB(12)-Holliday junction (HJ) complex. HJ DNA is sandwiched between 2 RuvA tetramers; dsDNA enters through RuvA and exits via RuvB. An RuvB hexamer assembles on each DNA strand where it exits the tetramer. Each RuvB hexamer is contacted by two RuvA subunits (via domain III) on 2 adjacent RuvB subunits; this complex drives branch migration. In the full resolvosome a probable DNA-RuvA(4)-RuvB(12)-RuvC(2) complex forms which resolves the HJ.

It localises to the cytoplasm. It carries out the reaction ATP + H2O = ADP + phosphate + H(+). Its function is as follows. The RuvA-RuvB-RuvC complex processes Holliday junction (HJ) DNA during genetic recombination and DNA repair, while the RuvA-RuvB complex plays an important role in the rescue of blocked DNA replication forks via replication fork reversal (RFR). RuvA specifically binds to HJ cruciform DNA, conferring on it an open structure. The RuvB hexamer acts as an ATP-dependent pump, pulling dsDNA into and through the RuvAB complex. RuvB forms 2 homohexamers on either side of HJ DNA bound by 1 or 2 RuvA tetramers; 4 subunits per hexamer contact DNA at a time. Coordinated motions by a converter formed by DNA-disengaged RuvB subunits stimulates ATP hydrolysis and nucleotide exchange. Immobilization of the converter enables RuvB to convert the ATP-contained energy into a lever motion, pulling 2 nucleotides of DNA out of the RuvA tetramer per ATP hydrolyzed, thus driving DNA branch migration. The RuvB motors rotate together with the DNA substrate, which together with the progressing nucleotide cycle form the mechanistic basis for DNA recombination by continuous HJ branch migration. Branch migration allows RuvC to scan DNA until it finds its consensus sequence, where it cleaves and resolves cruciform DNA. This chain is Holliday junction branch migration complex subunit RuvB, found in Rickettsia africae (strain ESF-5).